A 305-amino-acid polypeptide reads, in one-letter code: Ferredoxin--NADP reductase (305 aa).

Positions 31, 42, 82, and 274 each coordinate FAD.

Belongs to the ferredoxin--NADP reductase type 2 family. In terms of assembly, homodimer. Requires FAD as cofactor.

It catalyses the reaction 2 reduced [2Fe-2S]-[ferredoxin] + NADP(+) + H(+) = 2 oxidized [2Fe-2S]-[ferredoxin] + NADPH. In Ignicoccus hospitalis (strain KIN4/I / DSM 18386 / JCM 14125), this protein is Ferredoxin--NADP reductase.